The primary structure comprises 284 residues: Tropomyosin beta chain (284 aa).

Met-1 is subject to N-acetylmethionine. Residues Met-1 to Leu-284 are a coiled coil. 2 stretches are compositionally biased toward basic and acidic residues: residues Ala-22–Glu-40 and Lys-51–Glu-66. The segment at Ala-22–Glu-66 is disordered.

The protein belongs to the tropomyosin family. In terms of assembly, homodimer. Heterodimer of an alpha (TPM1, TPM3 or TPM4) and a beta (TPM2) chain.

The protein resides in the cytoplasm. It is found in the cytoskeleton. Binds to actin filaments in muscle and non-muscle cells. Plays a central role, in association with the troponin complex, in the calcium dependent regulation of vertebrate striated muscle contraction. Smooth muscle contraction is regulated by interaction with caldesmon. In non-muscle cells is implicated in stabilizing cytoskeleton actin filaments. This chain is Tropomyosin beta chain (TPM2), found in Gallus gallus (Chicken).